Consider the following 324-residue polypeptide: Arginase (324 aa).

Mn(2+)-binding residues include His-115, Asp-142, His-144, and Asp-146. Substrate contacts are provided by residues 144-148 (HTDLH), 155-157 (SGN), and Asp-196. Mn(2+) is bound by residues Asp-244 and Asp-246. Positions 258 and 289 each coordinate substrate.

This sequence belongs to the arginase family. In terms of assembly, homohexamer. It depends on Mn(2+) as a cofactor.

It catalyses the reaction L-arginine + H2O = urea + L-ornithine. Its pathway is nitrogen metabolism; urea cycle; L-ornithine and urea from L-arginine: step 1/1. The polypeptide is Arginase (arcA) (Agrobacterium fabrum (strain C58 / ATCC 33970) (Agrobacterium tumefaciens (strain C58))).